The primary structure comprises 98 residues: HIG1 domain family member 1B (98 aa).

Residues 1 to 28 (MSANKGWWVPPEGEDNLSKKFLRKTRES) are Cytoplasmic-facing. The region spanning 1 to 94 (MSANKGWWVP…YRDYIKRVSE (94 aa)) is the HIG1 domain. A helical membrane pass occupies residues 29–46 (PLVPIGVAGCLVIAAYRI). The Extracellular portion of the chain corresponds to 47-60 (YRLKARGSTKLSIH). Residues 61 to 83 (LIHTRVAAQACAVGAIMLGAMYT) form a helical membrane-spanning segment. Residues 84–98 (MYRDYIKRVSEDAEK) lie on the Cytoplasmic side of the membrane.

The protein localises to the membrane. This chain is HIG1 domain family member 1B (Higd1b), found in Mus musculus (Mouse).